A 1185-amino-acid chain; its full sequence is Calmodulin-binding transcription activator homolog 1 (1185 aa).

The segment at residues 72-200 is a DNA-binding region (CG-1); the sequence is AVELFPCFKD…YLNVKTNNKI (129 aa). Disordered regions lie at residues 252–277 and 390–411; these read GVNL…RRNS and KIRS…VTST. Over residues 393–411 the composition is skewed to low complexity; it reads SGSQESPMGPPSSSSVTST. One can recognise an IPT/TIG domain in the interval 418-498; that stretch reads EMTPSSSSLK…ISTASEFTYE (81 aa). One copy of the ANK repeat lies at 616–646; it reads DGSTPLHTACKNSASRIARLIISIDSSAIDV. The region spanning 957-984 is the IQ domain; the sequence is EAAMVIQRAYRVYRARSTTRRQEDIERR. Positions 1121-1185 are disordered; it reads CPQTSGDQRN…KPPYGCGTLA (65 aa). Residues 1128–1147 are compositionally biased toward basic and acidic residues; sequence QRNKRDSDGERKRDAHHDAP.

Belongs to the CAMTA family. As to quaternary structure, may interact with calmodulin. Expressed broadly in the nervous system.

It is found in the nucleus. Its function is as follows. Transcription factor. Positively modulates neuronal levels of the ubiquitous Ca2+ sensor calmodulin/cmd-1, probably by direct binding to the cmd-1 promoter, thereby regulating Ca2+ signaling, physiology, and behavior. The sequence is that of Calmodulin-binding transcription activator homolog 1 from Caenorhabditis elegans.